Reading from the N-terminus, the 314-residue chain is ATP synthase gamma chain (314 aa).

It belongs to the ATPase gamma chain family. In terms of assembly, F-type ATPases have 2 components, CF(1) - the catalytic core - and CF(0) - the membrane proton channel. CF(1) has five subunits: alpha(3), beta(3), gamma(1), delta(1), epsilon(1). CF(0) has three main subunits: a, b and c.

It localises to the cellular thylakoid membrane. In terms of biological role, produces ATP from ADP in the presence of a proton gradient across the membrane. The gamma chain is believed to be important in regulating ATPase activity and the flow of protons through the CF(0) complex. This is ATP synthase gamma chain from Rippkaea orientalis (strain PCC 8801 / RF-1) (Cyanothece sp. (strain PCC 8801)).